Reading from the N-terminus, the 217-residue chain is MQKFTLHKGLVAPMDRENVDTDAIIPKQFLKSIKKTGFGPNLFDEWRYLDQPGQPGVPESARKPNPDFVLNQPRYAGASILLARKNFGCGSSREHAPWALDQYGFRAIIAPSFADIFFNNSFKNGLLPIVLPEATVSQLFDEVHAFPGYELTVDLERQVIVRAQGAEIPFEVNAFRKYCLLNGFDDIGLTLRQADKIRAFEAERLATKPWLAHTMPA.

This sequence belongs to the LeuD family. LeuD type 1 subfamily. In terms of assembly, heterodimer of LeuC and LeuD.

The enzyme catalyses (2R,3S)-3-isopropylmalate = (2S)-2-isopropylmalate. The protein operates within amino-acid biosynthesis; L-leucine biosynthesis; L-leucine from 3-methyl-2-oxobutanoate: step 2/4. Its function is as follows. Catalyzes the isomerization between 2-isopropylmalate and 3-isopropylmalate, via the formation of 2-isopropylmaleate. In Paracidovorax citrulli (strain AAC00-1) (Acidovorax citrulli), this protein is 3-isopropylmalate dehydratase small subunit.